Here is a 380-residue protein sequence, read N- to C-terminus: Chaperone protein DnaJ (380 aa).

Positions 5 to 70 constitute a J domain; it reads DYYEVLGLQK…EKRAAYDQYG (66 aa). The segment at 136–214 adopts a CR-type zinc-finger fold; that stretch reads GCKKDIRIST…CHGDGRVQKA (79 aa). The Zn(2+) site is built by cysteine 149, cysteine 152, cysteine 166, cysteine 169, cysteine 188, cysteine 191, cysteine 202, and cysteine 205. CXXCXGXG motif repeat units follow at residues 149–156, 166–173, 188–195, and 202–209; these read CDTCHGSG, CSHCHGSG, CPSCHGSG, and CKSCHGDG.

It belongs to the DnaJ family. In terms of assembly, homodimer. Requires Zn(2+) as cofactor.

It localises to the cytoplasm. In terms of biological role, participates actively in the response to hyperosmotic and heat shock by preventing the aggregation of stress-denatured proteins and by disaggregating proteins, also in an autonomous, DnaK-independent fashion. Unfolded proteins bind initially to DnaJ; upon interaction with the DnaJ-bound protein, DnaK hydrolyzes its bound ATP, resulting in the formation of a stable complex. GrpE releases ADP from DnaK; ATP binding to DnaK triggers the release of the substrate protein, thus completing the reaction cycle. Several rounds of ATP-dependent interactions between DnaJ, DnaK and GrpE are required for fully efficient folding. Also involved, together with DnaK and GrpE, in the DNA replication of plasmids through activation of initiation proteins. The protein is Chaperone protein DnaJ of Actinobacillus pleuropneumoniae serotype 5b (strain L20).